The primary structure comprises 254 residues: K88 minor fimbrial subunit FaeI (254 aa).

The first 20 residues, 1 to 20, serve as a signal peptide directing secretion; it reads MKKVTLFLFVVSLLPSTVLA.

Belongs to the fimbrial K88 protein family.

It is found in the fimbrium. K88 minor fimbrial subunit, plays an essential role in the biogenesis of the K88 fimbriae. Fimbriae (also called pili), are polar filaments radiating from the surface of the bacterium to a length of 0.5-1.5 micrometers and numbering 100-300 per cell. They enable bacteria to colonize the epithelium of specific host organs. The chain is K88 minor fimbrial subunit FaeI (faeI) from Escherichia coli.